The sequence spans 712 residues: Ribosomal RNA large subunit methyltransferase K/L (712 aa).

Residues Gly46–Leu157 enclose the THUMP domain.

The protein belongs to the methyltransferase superfamily. RlmKL family.

The protein localises to the cytoplasm. It carries out the reaction guanosine(2445) in 23S rRNA + S-adenosyl-L-methionine = N(2)-methylguanosine(2445) in 23S rRNA + S-adenosyl-L-homocysteine + H(+). The enzyme catalyses guanosine(2069) in 23S rRNA + S-adenosyl-L-methionine = N(2)-methylguanosine(2069) in 23S rRNA + S-adenosyl-L-homocysteine + H(+). Specifically methylates the guanine in position 2445 (m2G2445) and the guanine in position 2069 (m7G2069) of 23S rRNA. This Actinobacillus pleuropneumoniae serotype 5b (strain L20) protein is Ribosomal RNA large subunit methyltransferase K/L.